The following is a 1197-amino-acid chain: Sensor protein EvgS (1197 aa).

Positions Met-1–Ala-21 are cleaved as a signal peptide. The Cytoplasmic portion of the chain corresponds to Asp-22–Arg-325. The helical transmembrane segment at Gly-326–Ile-346 threads the bilayer. The Periplasmic portion of the chain corresponds to Thr-347–Tyr-537. A helical transmembrane segment spans residues Ile-538 to Leu-558. Residues Arg-559–Asn-1197 are Cytoplasmic-facing. A Histidine kinase domain is found at Thr-718–Ile-938. A Phosphohistidine; by autocatalysis modification is found at His-721. A Response regulatory domain is found at Ser-960–His-1074. Residue Asp-1009 is modified to 4-aspartylphosphate. Positions Asp-1098–Asn-1197 constitute an HPt domain. His-1137 carries the post-translational modification Phosphohistidine.

In terms of processing, activation requires a sequential transfer of a phosphate group from a His in the primary transmitter domain, to an Asp in the receiver domain and to a His in the secondary transmitter domain.

Its subcellular location is the cell inner membrane. The catalysed reaction is ATP + protein L-histidine = ADP + protein N-phospho-L-histidine.. In terms of biological role, member of the two-component regulatory system EvgS/EvgA. Phosphorylates EvgA via a four-step phosphorelay in response to environmental signals. The protein is Sensor protein EvgS (evgS) of Escherichia coli O157:H7.